We begin with the raw amino-acid sequence, 484 residues long: Glycogen synthase (484 aa).

Lys15 provides a ligand contact to ADP-alpha-D-glucose.

This sequence belongs to the glycosyltransferase 1 family. Bacterial/plant glycogen synthase subfamily.

The enzyme catalyses [(1-&gt;4)-alpha-D-glucosyl](n) + ADP-alpha-D-glucose = [(1-&gt;4)-alpha-D-glucosyl](n+1) + ADP + H(+). It functions in the pathway glycan biosynthesis; glycogen biosynthesis. Synthesizes alpha-1,4-glucan chains using ADP-glucose. This Bacillus licheniformis (strain ATCC 14580 / DSM 13 / JCM 2505 / CCUG 7422 / NBRC 12200 / NCIMB 9375 / NCTC 10341 / NRRL NRS-1264 / Gibson 46) protein is Glycogen synthase.